Reading from the N-terminus, the 388-residue chain is MSWWWKRSIGAGKNLPNQNKENGVCKSYKSVALVVGVTGIVGSSLAEVLKLPDTPGGPWKVYGVARRPCPVWLAKKPVEYIQCDVSDNQETISKLSPLKDITHIFYVSWIGSEDCQTNATMFKNILNSVIPNASNLQHVCLQTGIKHYFGIFEEGSKVVPHDSPFTEDLPRLNVPNFYHDLEDILYEETGKNNLTWSVHRPALVFGFSPCSMMNIVSTLCVYATICKHENKALVYPGSKNSWNCYADAVDADLVAEHEIWAAVDPKAKNQVLNCNNGDVFKWKHIWKKLAEEFGIEMVGYVEGKEQVSLAELMKDKDQVWDEIVKKNNLVPTKLKEIAAFWFADIAFCSENLISSMNKSKELGFLGFRNSMKSFVSCIDKMRDYRFIP.

Residues 38 to 40 (TGI), 66 to 67 (RR), 84 to 85 (DV), 108 to 109 (SW), and glutamine 142 contribute to the NADP(+) site. Catalysis depends on residues lysine 146 and tyrosine 178. Positions 146 and 178 each coordinate substrate. Residues tyrosine 178, valine 204, and 211–213 (SMM) each bind NADP(+). Serine 349 contributes to the substrate binding site.

This sequence belongs to the short-chain dehydrogenases/reductases (SDR) family. Highly divergent. In terms of assembly, homodimer. Expressed in internal phloem-associated parenchyma (IPAP) cells.

It localises to the cytoplasm. The protein localises to the cytosol. The catalysed reaction is (S)-8-oxocitronellyl enol + NADP(+) = (6E)-8-oxogeranial + NADPH + H(+). The enzyme catalyses (S)-8-oxocitronellyl enol + NAD(+) = (6E)-8-oxogeranial + NADH + H(+). Iridoid synthase that catalyzes the first step in generation of the iridoid ring scaffold using the linear monoterpene (6E)-8-oxogeranial as substrate. Iridoids comprise a large family of distinctive bicyclic monoterpenes that possess a wide range of pharmacological activities, including anticancer, anti-inflammatory, antifungal and antibacterial activities. This is (S)-8-oxocitronellyl enol synthase from Catharanthus roseus (Madagascar periwinkle).